Reading from the N-terminus, the 235-residue chain is Ribitol-5-phosphate cytidylyltransferase (235 aa).

CTP is bound by residues 7–10, 82–88, and serine 113; these read LAGG and GADRNTS.

Belongs to the IspD/TarI cytidylyltransferase family. TarI subfamily.

It carries out the reaction D-ribitol 5-phosphate + CTP + H(+) = CDP-L-ribitol + diphosphate. The protein operates within cell wall biogenesis; poly(ribitol phosphate) teichoic acid biosynthesis. Functionally, catalyzes the transfer of the cytidylyl group of CTP to D-ribitol 5-phosphate. The sequence is that of Ribitol-5-phosphate cytidylyltransferase from Streptococcus pneumoniae serotype 19F (strain G54).